We begin with the raw amino-acid sequence, 351 residues long: Calcium release-activated calcium channel protein 1 (351 aa).

The segment covering 1-21 has biased composition (polar residues); the sequence is MSVWTTANNSGLETPTKSPIT. Disordered stretches follow at residues 1–39 and 71–141; these read MSVW…TGNH and HAHP…EDLH. The Cytoplasmic segment spans residues 1–163; it reads MSVWTTANNS…SRAKLKASSK (163 aa). Composition is skewed to low complexity over residues 22 to 33 and 80 to 93; these read SSVPRAARSSAV and SNSP…SNNS. The span at 94-106 shows a compositional bias: polar residues; sequence AGFQRTSISNSLL. A helical membrane pass occupies residues 164–181; the sequence is TSALLSGFAMVAMVEVQL. The Extracellular portion of the chain corresponds to 182–191; the sequence is DHDTNVPPGM. Residues 192–212 form a helical membrane-spanning segment; the sequence is LIAFAICTTLLVAVHMLALMI. Over 213–248 the chain is Cytoplasmic; that stretch reads STCILPNIETVCNLHSISLVHESPHERLHWYIETAW. A helical membrane pass occupies residues 249-269; sequence AFSTLLGLILFLLEIAILCWV. Topologically, residues 270 to 277 are extracellular; sequence KFYDLSPP. Residues 278–298 form a helical membrane-spanning segment; it reads AAWSACVVLIPVMIIFMAFAI. Residues 299–351 are Cytoplasmic-facing; the sequence is HFYRSLVSHKYEVTVSGIRELEMLKEQMEQDHLEHHNNIRNNGMNYGASGDIV.

This sequence belongs to the Orai family. As to quaternary structure, hexamer.

The protein resides in the cell membrane. The catalysed reaction is Ca(2+)(in) = Ca(2+)(out). Pore-forming subunit of inward rectifying Ca(2+) release-activated Ca(2+) (CRAC) channels. Assembles in hexameric CRAC channels that mediate Ca(2+) influx upon depletion of endoplasmic reticulum Ca(2+) store and channel activation by Ca(2+) sensor Stim, a process known as store-operated Ca(2+) entry (SOCE). Regulates transcription factor NFAT nuclear import. The protein is Calcium release-activated calcium channel protein 1 of Drosophila melanogaster (Fruit fly).